The sequence spans 159 residues: 2-C-methyl-D-erythritol 2,4-cyclodiphosphate synthase (159 aa).

Residues Asp10 and His12 each coordinate a divalent metal cation. 4-CDP-2-C-methyl-D-erythritol 2-phosphate contacts are provided by residues 10-12 (DVH) and 36-37 (HS). His44 serves as a coordination point for a divalent metal cation. 4-CDP-2-C-methyl-D-erythritol 2-phosphate-binding positions include 58–60 (DIG), 63–67 (FPDTD), 102–108 (AQAPKMA), 134–137 (TTTE), Phe141, and Arg144.

This sequence belongs to the IspF family. Homotrimer. It depends on a divalent metal cation as a cofactor.

The enzyme catalyses 4-CDP-2-C-methyl-D-erythritol 2-phosphate = 2-C-methyl-D-erythritol 2,4-cyclic diphosphate + CMP. It functions in the pathway isoprenoid biosynthesis; isopentenyl diphosphate biosynthesis via DXP pathway; isopentenyl diphosphate from 1-deoxy-D-xylulose 5-phosphate: step 4/6. Functionally, involved in the biosynthesis of isopentenyl diphosphate (IPP) and dimethylallyl diphosphate (DMAPP), two major building blocks of isoprenoid compounds. Catalyzes the conversion of 4-diphosphocytidyl-2-C-methyl-D-erythritol 2-phosphate (CDP-ME2P) to 2-C-methyl-D-erythritol 2,4-cyclodiphosphate (ME-CPP) with a corresponding release of cytidine 5-monophosphate (CMP). This is 2-C-methyl-D-erythritol 2,4-cyclodiphosphate synthase from Shewanella halifaxensis (strain HAW-EB4).